The primary structure comprises 555 residues: Formate--tetrahydrofolate ligase (555 aa).

Position 65-72 (65-72) interacts with ATP; sequence TPAGEGKT.

It belongs to the formate--tetrahydrofolate ligase family.

The enzyme catalyses (6S)-5,6,7,8-tetrahydrofolate + formate + ATP = (6R)-10-formyltetrahydrofolate + ADP + phosphate. It functions in the pathway one-carbon metabolism; tetrahydrofolate interconversion. The sequence is that of Formate--tetrahydrofolate ligase from Syntrophomonas wolfei subsp. wolfei (strain DSM 2245B / Goettingen).